Here is a 307-residue protein sequence, read N- to C-terminus: uncharacterized protein (307 aa).

Composition is skewed to basic and acidic residues over residues 42-52 (TCRSPGEDKCP) and 112-121 (QKKEEPEGSH). A disordered region spans residues 42 to 153 (TCRSPGEDKC…VPPAVASASA (112 aa)). Basic residues predominate over residues 129-139 (KQHKKAKKRKS).

This is an uncharacterized protein from Mus musculus (Mouse).